The primary structure comprises 500 residues: Cobyric acid synthase (500 aa).

Residues 253–446 enclose the GATase cobBQ-type domain; that stretch reads KIGVAAIYFP…FHGFFDRPEV (194 aa). Cys334 functions as the Nucleophile in the catalytic mechanism. Residue His438 is part of the active site.

The protein belongs to the CobB/CobQ family. CobQ subfamily.

It participates in cofactor biosynthesis; adenosylcobalamin biosynthesis. Catalyzes amidations at positions B, D, E, and G on adenosylcobyrinic A,C-diamide. NH(2) groups are provided by glutamine, and one molecule of ATP is hydrogenolyzed for each amidation. The polypeptide is Cobyric acid synthase (Chlorobaculum tepidum (strain ATCC 49652 / DSM 12025 / NBRC 103806 / TLS) (Chlorobium tepidum)).